A 186-amino-acid chain; its full sequence is Crossover junction endodeoxyribonuclease RuvC (186 aa).

Catalysis depends on residues D7, E67, and D140. Mg(2+)-binding residues include D7, E67, and D140.

Belongs to the RuvC family. Homodimer which binds Holliday junction (HJ) DNA. The HJ becomes 2-fold symmetrical on binding to RuvC with unstacked arms; it has a different conformation from HJ DNA in complex with RuvA. In the full resolvosome a probable DNA-RuvA(4)-RuvB(12)-RuvC(2) complex forms which resolves the HJ. Mg(2+) is required as a cofactor.

The protein localises to the cytoplasm. It catalyses the reaction Endonucleolytic cleavage at a junction such as a reciprocal single-stranded crossover between two homologous DNA duplexes (Holliday junction).. The RuvA-RuvB-RuvC complex processes Holliday junction (HJ) DNA during genetic recombination and DNA repair. Endonuclease that resolves HJ intermediates. Cleaves cruciform DNA by making single-stranded nicks across the HJ at symmetrical positions within the homologous arms, yielding a 5'-phosphate and a 3'-hydroxyl group; requires a central core of homology in the junction. The consensus cleavage sequence is 5'-(A/T)TT(C/G)-3'. Cleavage occurs on the 3'-side of the TT dinucleotide at the point of strand exchange. HJ branch migration catalyzed by RuvA-RuvB allows RuvC to scan DNA until it finds its consensus sequence, where it cleaves and resolves the cruciform DNA. This Chloroherpeton thalassium (strain ATCC 35110 / GB-78) protein is Crossover junction endodeoxyribonuclease RuvC.